The sequence spans 144 residues: Large ribosomal subunit protein uL16 (144 aa).

The span at 1–17 (MLQPKKTKFRRQQKGRA) shows a compositional bias: basic residues. Residues 1 to 22 (MLQPKKTKFRRQQKGRAKGNAQ) form a disordered region.

This sequence belongs to the universal ribosomal protein uL16 family. Part of the 50S ribosomal subunit.

Functionally, binds 23S rRNA and is also seen to make contacts with the A and possibly P site tRNAs. This chain is Large ribosomal subunit protein uL16, found in Bacteroides thetaiotaomicron (strain ATCC 29148 / DSM 2079 / JCM 5827 / CCUG 10774 / NCTC 10582 / VPI-5482 / E50).